A 669-amino-acid chain; its full sequence is MTGLFQLVSSYSPSGDQPTAVQKLVTNFHAGIAKQVLLGVTGSGKTYTIANVVEQIQKPTLVMAPNKTLAAQLYGEFKAFFPHNAVEYFVSYYDYYQPEAYVPASDTFIEKDSSINEYIEQMRLAATKALLSRSDVLVVATVSAIYGLGAPEDYLSLRLILSLGEHIEQRQLIRHLTELQYTRNELDLVRGSFRVRGEVVDVFPAESEMEALRIELFDGEIESLSLFDPLTGQTVRKLQRYSVYPKTHYATTRERTLSAVDTIKDELKEYLELLYGRNKLVEAQRLAQRTQFDLEMMAEVGYCNGIENYSRHLTGKAPGEPPPTLFDYLPPDALLVIDESHVTIPQIGAMFKGDRSRKETLVEFGFRLPSALDNRPLRFEEWEVRSPRSIYVSATPGSYEFRESAGEVIELLVRPTGLIDPEIEIRPVATQVDDLISQINVCIKLGDRVLVTTLTKRMAENLTEYLSEQGIRIRYLHSEIDTVERVEIIRDLRLGKFDVLVGINLLREGLDMPEVSLVAILDADKEGFLRSTSSLIQTIGRAARSVRGRAILYADKVTRSMRAAIDETERRRQKQKEYNAENGIVPKSVVRPISDILEGARDGVEVKSKGKGRRVDEVPADYCALNQAEIAAQMKVLEQQMYQHARDLEFEDAARIRDQIQRLREAGLG.

Residues 26–414 (TNFHAGIAKQ…AGEVIELLVR (389 aa)) form the Helicase ATP-binding domain. 39–46 (GVTGSGKT) contacts ATP. The Beta-hairpin motif lies at 92–115 (YYDYYQPEAYVPASDTFIEKDSSI). A Helicase C-terminal domain is found at 435-597 (LISQINVCIK…SVVRPISDIL (163 aa)). Positions 631–666 (AAQMKVLEQQMYQHARDLEFEDAARIRDQIQRLREA) constitute a UVR domain.

The protein belongs to the UvrB family. As to quaternary structure, forms a heterotetramer with UvrA during the search for lesions. Interacts with UvrC in an incision complex.

The protein localises to the cytoplasm. Functionally, the UvrABC repair system catalyzes the recognition and processing of DNA lesions. A damage recognition complex composed of 2 UvrA and 2 UvrB subunits scans DNA for abnormalities. Upon binding of the UvrA(2)B(2) complex to a putative damaged site, the DNA wraps around one UvrB monomer. DNA wrap is dependent on ATP binding by UvrB and probably causes local melting of the DNA helix, facilitating insertion of UvrB beta-hairpin between the DNA strands. Then UvrB probes one DNA strand for the presence of a lesion. If a lesion is found the UvrA subunits dissociate and the UvrB-DNA preincision complex is formed. This complex is subsequently bound by UvrC and the second UvrB is released. If no lesion is found, the DNA wraps around the other UvrB subunit that will check the other stand for damage. In Xylella fastidiosa (strain 9a5c), this protein is UvrABC system protein B.